We begin with the raw amino-acid sequence, 402 residues long: uncharacterized protein (402 aa).

Helical transmembrane passes span 12 to 32 (FWLI…ITSV), 48 to 68 (GAAG…SPLA), 80 to 100 (TLWL…TGYT), 101 to 121 (AALF…NVLL), 134 to 154 (GIMI…ASGV), 168 to 188 (QAFL…IPQL), 212 to 232 (WYVT…IAWF), 248 to 268 (WMVS…PVLA), 291 to 311 (GLLA…IGIG), 339 to 359 (MSQS…GYLF), and 367 to 387 (MPIV…QGAG).

Belongs to the major facilitator superfamily. Cyanate porter (TC 2.A.1.17) family.

It localises to the cell membrane. This is an uncharacterized protein from Bacillus subtilis (strain 168).